The chain runs to 432 residues: Mannan endo-1,4-beta-mannosidase 1 (432 aa).

Residues 1–28 (MRLLGAHRAALLVLACVVVVVIHGLGEA) form the signal peptide. 2 residues coordinate substrate: tryptophan 93 and asparagine 209. Glutamate 210 acts as the Proton donor in catalysis. Tyrosine 289 serves as a coordination point for substrate. The active-site Nucleophile is glutamate 329. A substrate-binding site is contributed by tryptophan 371.

It belongs to the glycosyl hydrolase 5 (cellulase A) family. Ubiquitous.

Its subcellular location is the secreted. The catalysed reaction is Random hydrolysis of (1-&gt;4)-beta-D-mannosidic linkages in mannans, galactomannans and glucomannans.. The polypeptide is Mannan endo-1,4-beta-mannosidase 1 (MAN1) (Oryza sativa subsp. japonica (Rice)).